The primary structure comprises 177 residues: LOB domain-containing protein 33 (177 aa).

The 103-residue stretch at 6-108 folds into the LOB domain; it reads SSCGACKFLR…EEIEFLGSQM (103 aa).

Belongs to the LOB domain-containing protein family. Expressed in roots.

The chain is LOB domain-containing protein 33 (LBD33) from Arabidopsis thaliana (Mouse-ear cress).